Here is a 342-residue protein sequence, read N- to C-terminus: Ferredoxin--NADP reductase (342 aa).

The FAD site is built by Cys-17, Asp-36, Gln-44, Tyr-49, Val-89, Phe-124, Asp-289, and Thr-330.

The protein belongs to the ferredoxin--NADP reductase type 2 family. As to quaternary structure, homodimer. FAD is required as a cofactor.

It carries out the reaction 2 reduced [2Fe-2S]-[ferredoxin] + NADP(+) + H(+) = 2 oxidized [2Fe-2S]-[ferredoxin] + NADPH. The sequence is that of Ferredoxin--NADP reductase from Bradyrhizobium sp. (strain BTAi1 / ATCC BAA-1182).